A 387-amino-acid polypeptide reads, in one-letter code: Acyltransferase MdmB (387 aa).

Transmembrane regions (helical) follow at residues 8–28 (LPSL…CHIA), 45–65 (ITTL…FVLA), 85–105 (IYPL…SLAE), 139–161 (TPSW…YRLV), 170–190 (WWCA…TSQF), 209–229 (CWLP…ALIL), 236–256 (GPGV…TQVV), 258–278 (PMFT…TALA), 292–312 (AVLV…FMVI), and 336–356 (ALAL…HTVV).

This sequence belongs to the acyltransferase 3 family.

The protein localises to the cell membrane. Its function is as follows. Catalyzes the acylation of the mycaminose sugar during midecamycin biosynthesis. This is Acyltransferase MdmB (mdmB) from Streptomyces mycarofaciens.